The primary structure comprises 490 residues: Cysteine--tRNA ligase (490 aa).

C36 is a Zn(2+) binding site. A 'HIGH' region motif is present at residues 38 to 48 (VTVYDYSHIGH). C216, H241, and E245 together coordinate Zn(2+). The 'KMSKS' region motif lies at 278–282 (KMSKS). K281 provides a ligand contact to ATP.

The protein belongs to the class-I aminoacyl-tRNA synthetase family. Monomer. Requires Zn(2+) as cofactor.

It localises to the cytoplasm. The catalysed reaction is tRNA(Cys) + L-cysteine + ATP = L-cysteinyl-tRNA(Cys) + AMP + diphosphate. The sequence is that of Cysteine--tRNA ligase from Magnetococcus marinus (strain ATCC BAA-1437 / JCM 17883 / MC-1).